The primary structure comprises 265 residues: Acetylglutamate kinase (265 aa).

Substrate-binding positions include Gly41 to Gly42, Arg63, and Asn156.

This sequence belongs to the acetylglutamate kinase family. ArgB subfamily.

It is found in the cytoplasm. It carries out the reaction N-acetyl-L-glutamate + ATP = N-acetyl-L-glutamyl 5-phosphate + ADP. It functions in the pathway amino-acid biosynthesis; L-arginine biosynthesis; N(2)-acetyl-L-ornithine from L-glutamate: step 2/4. Functionally, catalyzes the ATP-dependent phosphorylation of N-acetyl-L-glutamate. In Oceanobacillus iheyensis (strain DSM 14371 / CIP 107618 / JCM 11309 / KCTC 3954 / HTE831), this protein is Acetylglutamate kinase.